Consider the following 325-residue polypeptide: Phospholipid phosphatase-related protein type 1 (325 aa).

N5 carries an N-linked (GlcNAc...) asparagine glycan. Transmembrane regions (helical) follow at residues 13-33 (IIPC…LLAY), 67-87 (FISP…IIFI), and 127-147 (FIGV…AGQV). N-linked (GlcNAc...) asparagine glycosylation occurs at N163. Transmembrane regions (helical) follow at residues 201–218 (AALS…ITST), 230–247 (VLCL…LNRV), and 257–277 (VIAG…CVVH). S307 carries the post-translational modification Phosphoserine. An N-linked (GlcNAc...) asparagine glycan is attached at N316.

It belongs to the PA-phosphatase related phosphoesterase family.

The protein resides in the cell membrane. It localises to the cell projection. It is found in the neuron projection. May play a role in neurite outgrowth and neurogenesis. In Mus musculus (Mouse), this protein is Phospholipid phosphatase-related protein type 1.